Consider the following 467-residue polypeptide: Fumarate hydratase class II (467 aa).

Substrate contacts are provided by residues 98 to 100 (SGT), R126, 129 to 132 (HPND), 139 to 141 (SSN), and T187. H188 serves as the catalytic Proton donor/acceptor. Residue S318 is part of the active site. Substrate contacts are provided by residues S319 and 324-326 (KVN).

Belongs to the class-II fumarase/aspartase family. Fumarase subfamily. Homotetramer.

Its subcellular location is the cytoplasm. It carries out the reaction (S)-malate = fumarate + H2O. It functions in the pathway carbohydrate metabolism; tricarboxylic acid cycle; (S)-malate from fumarate: step 1/1. Its function is as follows. Involved in the TCA cycle. Catalyzes the stereospecific interconversion of fumarate to L-malate. The protein is Fumarate hydratase class II of Escherichia coli O6:H1 (strain CFT073 / ATCC 700928 / UPEC).